Reading from the N-terminus, the 535-residue chain is Proto-oncogene tyrosine-protein kinase Src (535 aa).

Positions 1-56 (MGSNKSKPKDASQRRRSLEPSENVHGAGGAFPASQTPSKPASADGHRGPSAAFVPP) are disordered. Gly-2 carries N-myristoyl glycine lipidation. The segment covering 7 to 19 (KPKDASQRRRSLE) has biased composition (basic and acidic residues). Phosphoserine is present on residues Ser-17, Ser-21, and Ser-74. One can recognise an SH3 domain in the interval 83-144 (GGVTTFVALY…PSNYVAPSDS (62 aa)). The SH2 domain occupies 150–247 (WYFGKITRRE…GLCHRLTTVC (98 aa)). Tyr-186 carries the phosphotyrosine modification. One can recognise a Protein kinase domain in the interval 269 to 522 (LRLEVKLGQG…YLQAFLEDYF (254 aa)). ATP is bound by residues 275 to 283 (LGQGCFGEV) and Lys-297. Asp-388 functions as the Proton acceptor in the catalytic mechanism. The residue at position 418 (Tyr-418) is a Phosphotyrosine; by autocatalysis. Position 418 is a phosphotyrosine; by FAK2 (Tyr-418). Residue Tyr-529 is modified to Phosphotyrosine; by CSK.

It belongs to the protein kinase superfamily. Tyr protein kinase family. SRC subfamily. As to quaternary structure, part of a complex comprised of PTPRA, BCAR1, BCAR3 (via SH2 domain) and SRC; the formation of the complex is dependent on integrin mediated-tyrosine phosphorylation of PTPRA. Interacts with CDCP1, TGFB1I1 and TOM1L2. Interacts with DDEF1/ASAP1 via its SH3 domain. Interacts with CCPG1. Interacts with the cytoplasmic domain of MUC1, phosphorylates it and increases binding of MUC1 with beta-catenin. Interacts with RALGPS1 via its SH3 domain. Interacts with CAV2 (tyrosine phosphorylated form). Interacts (via the SH3 domain and the protein kinase domain) with ARRB1; the interaction is independent of the phosphorylation state of SRC C-terminus. Interacts with FCAMR and PXN. Interacts with ARRB2. Interacts with ARRB1. Interacts with SRCIN1. Interacts with NDFIP2 and more weakly with NDFIP1. Interacts with PIK3CA and/or PIK3C2B, PTK2/FAK1, ESR1 (dimethylated on arginine) and FAK. Interacts (via SH2 and SH3 domain) with TNK2. Interacts (via protein kinase domain) with the tyrosine phosphorylated form of RUNX3 (via runt domain). Interacts with TRAF3 (via RING-type zinc finger domain). Interacts with RIGI, MAVS and TBK1. Interacts (via SH2 domain) with RACK1; the interaction is enhanced by tyrosine phosphorylation of RACK1 and inhibits SRC activity. Interacts (via SH2 domain) with the 'Tyr-402' phosphorylated form of PTK2B/PYK2. Interacts (via SH2 domain) with FLT3 (tyrosine phosphorylated). Identified in a complex containing FGFR4, NCAM1, CDH2, PLCG1, FRS2, SRC, SHC1, GAP43 and CTTN. Interacts with EPHB1; activates the MAPK/ERK cascade to regulate cell migration. Interacts with ERBB2 and STAT1. Interacts with PDGFRA (tyrosine phosphorylated). Interacts with CSF1R. Interacts (via SH2 domain) with the 'Tyr-9' phosphorylated form of PDPK1. Interacts with DDR2. Interacts with AMOTL2; this interaction regulates the translocation of phosphorylated SRC to peripheral cell-matrix adhesion sites. Interacts with DDR1 and DAB2. Interacts with TRAP1. Interacts with CBLC; the interaction is enhanced when SRC is phosphorylated at 'Tyr-424'. Interacts with ARHGEF5. Interacts (via cytoplasmic domain) with CEACAM1 (via SH2 domain); this interaction is regulated by trans-homophilic cell adhesion. Interacts with MPP2. Interacts with PRR7. Interacts (via kinase domain and to a lesser extent the SH2 domain) directly with PDLIM4; this interaction results in PTPN13-mediated dephosphorylation of this protein leading to its inactivation. Interacts with P85 (PIK3R1 or PIK3R2). Interacts with HNRNPA2B1. Interacts with IL6ST/gp130. Interacts (via SH3 domain) with PELP1 in the presence of 17-beta-estradiol. Interacts with AMBRA1. Post-translationally, myristoylated at Gly-2, and this is essential for targeting to membranes. Dephosphorylated at Tyr-529 by PTPRJ. Phosphorylated on Tyr-529 by c-Src kinase (CSK). The phosphorylated form is termed pp60c-src. Dephosphorylated by PTPRJ at Tyr-418. Normally maintained in an inactive conformation with the SH2 domain engaged with Tyr-529, the SH3 domain engaged with the SH2-kinase linker, and Tyr-418 dephosphorylated. Dephosphorylation of Tyr-529 as a result of protein tyrosine phosphatase (PTP) action disrupts the intramolecular interaction between the SH2 domain and Tyr-529, Tyr-418 can then become autophosphorylated, resulting in SRC activation. Phosphorylation of Tyr-529 by CSK allows this interaction to reform, resulting in SRC inactivation. CDK5-mediated phosphorylation at Ser-74 targets SRC to ubiquitin-dependent degradation and thus leads to cytoskeletal reorganization. Phosphorylated by PTK2/FAK1; this enhances kinase activity. Phosphorylated by PTK2B/PYK2; this enhances kinase activity. Upon activation of IL6ST by IL6, Tyr-418 is phosphorylated and Tyr-529 dephosphorylated. In terms of processing, displays reduced levels of autophosphorylation at Tyr-418 compared to isoform 2. Post-translationally, displays enhanced levels of autophosphorylation at Tyr-418 compared to isoform 1. S-nitrosylation is important for activation of its kinase activity. In terms of processing, ubiquitinated in response to CDK5-mediated phosphorylation. Ubiquitination mediated by CBLC requires SRC autophosphorylation at Tyr-418 and may lead to lysosomal degradation.

It localises to the cell membrane. Its subcellular location is the mitochondrion inner membrane. It is found in the nucleus. The protein localises to the cytoplasm. The protein resides in the cytoskeleton. It localises to the perinuclear region. Its subcellular location is the cell junction. It is found in the focal adhesion. The enzyme catalyses L-tyrosyl-[protein] + ATP = O-phospho-L-tyrosyl-[protein] + ADP + H(+). Its activity is regulated as follows. Phosphorylation by CSK at Tyr-529 inhibits kinase activity. Inhibitory phosphorylation at Tyr-529 is enhanced by heme. Further phosphorylation by CDK1 partially reactivates CSK-inactivated SRC and facilitates complete reactivation by protein tyrosine phosphatase PTPRC. Integrin engagement stimulates kinase activity. Phosphorylation by PTK2/FAK1 enhances kinase activity. Butein and pseudosubstrate-based peptide inhibitors like CIYKYYF act as inhibitors. Phosphorylation at Tyr-418 increases kinase activity. Non-receptor protein tyrosine kinase which is activated following engagement of many different classes of cellular receptors including immune response receptors, integrins and other adhesion receptors, receptor protein tyrosine kinases, G protein-coupled receptors as well as cytokine receptors. Participates in signaling pathways that control a diverse spectrum of biological activities including gene transcription, immune response, cell adhesion, cell cycle progression, apoptosis, migration, and transformation. Due to functional redundancy between members of the SRC kinase family, identification of the specific role of each SRC kinase is very difficult. SRC appears to be one of the primary kinases activated following engagement of receptors and plays a role in the activation of other protein tyrosine kinase (PTK) families. Receptor clustering or dimerization leads to recruitment of SRC to the receptor complexes where it phosphorylates the tyrosine residues within the receptor cytoplasmic domains. Plays an important role in the regulation of cytoskeletal organization through phosphorylation of specific substrates such as AFAP1. Phosphorylation of AFAP1 allows the SRC SH2 domain to bind AFAP1 and to localize to actin filaments. Cytoskeletal reorganization is also controlled through the phosphorylation of cortactin (CTTN). When cells adhere via focal adhesions to the extracellular matrix, signals are transmitted by integrins into the cell resulting in tyrosine phosphorylation of a number of focal adhesion proteins, including PTK2/FAK1 and paxillin (PXN). In addition to phosphorylating focal adhesion proteins, SRC is also active at the sites of cell-cell contact adherens junctions and phosphorylates substrates such as beta-catenin (CTNNB1), delta-catenin (CTNND1), and plakoglobin (JUP). Another type of cell-cell junction, the gap junction, is also a target for SRC, which phosphorylates connexin-43 (GJA1). SRC is implicated in regulation of pre-mRNA-processing and phosphorylates RNA-binding proteins such as KHDRBS1. Phosphorylates PKP3 at 'Tyr-195' in response to reactive oxygen species, which may cause the release of PKP3 from desmosome cell junctions into the cytoplasm. Also plays a role in PDGF-mediated tyrosine phosphorylation of both STAT1 and STAT3, leading to increased DNA binding activity of these transcription factors. Involved in the RAS pathway through phosphorylation of RASA1 and RASGRF1. Plays a role in EGF-mediated calcium-activated chloride channel activation. Required for epidermal growth factor receptor (EGFR) internalization through phosphorylation of clathrin heavy chain (CLTC and CLTCL1) at 'Tyr-1477'. Involved in beta-arrestin (ARRB1 and ARRB2) desensitization through phosphorylation and activation of GRK2, leading to beta-arrestin phosphorylation and internalization. Has a critical role in the stimulation of the CDK20/MAPK3 mitogen-activated protein kinase cascade by epidermal growth factor. Might be involved not only in mediating the transduction of mitogenic signals at the level of the plasma membrane but also in controlling progression through the cell cycle via interaction with regulatory proteins in the nucleus. Plays an important role in osteoclastic bone resorption in conjunction with PTK2B/PYK2. Both the formation of a SRC-PTK2B/PYK2 complex and SRC kinase activity are necessary for this function. Recruited to activated integrins by PTK2B/PYK2, thereby phosphorylating CBL, which in turn induces the activation and recruitment of phosphatidylinositol 3-kinase to the cell membrane in a signaling pathway that is critical for osteoclast function. Promotes energy production in osteoclasts by activating mitochondrial cytochrome C oxidase. Phosphorylates DDR2 on tyrosine residues, thereby promoting its subsequent autophosphorylation. Phosphorylates RUNX3 and COX2 on tyrosine residues, TNK2 on 'Tyr-284' and CBL on 'Tyr-738'. Enhances RIGI-elicited antiviral signaling. Phosphorylates PDPK1 at 'Tyr-9', 'Tyr-373' and 'Tyr-376'. Phosphorylates BCAR1 at 'Tyr-226'. Phosphorylates CBLC at multiple tyrosine residues, phosphorylation at 'Tyr-341' activates CBLC E3 activity. Phosphorylates synaptic vesicle protein synaptophysin (SYP). Involved in anchorage-independent cell growth. Required for podosome formation. Mediates IL6 signaling by activating YAP1-NOTCH pathway to induce inflammation-induced epithelial regeneration. Phosphorylates OTUB1, promoting deubiquitination of RPTOR. Its function is as follows. Non-receptor protein tyrosine kinase which phosphorylates synaptophysin with high affinity. Functionally, non-receptor protein tyrosine kinase which shows higher basal kinase activity than isoform 1, possibly due to weakened intramolecular interactions which enhance autophosphorylation of Tyr-418 and subsequent activation. The SH3 domain shows reduced affinity with the linker sequence between the SH2 and kinase domains which may account for the increased basal activity. Displays altered substrate specificity compared to isoform 1, showing weak affinity for synaptophysin and for peptide substrates containing class I or class II SH3 domain-binding motifs. Plays a role in L1CAM-mediated neurite elongation, possibly by acting downstream of L1CAM to drive cytoskeletal rearrangements involved in neurite outgrowth. This is Proto-oncogene tyrosine-protein kinase Src from Mus musculus (Mouse).